The sequence spans 430 residues: Tol-Pal system protein TolB (430 aa).

The first 21 residues, 1 to 21 (MKQAFRVALGFLVLWASVLHA), serve as a signal peptide directing secretion.

The protein belongs to the TolB family. In terms of assembly, the Tol-Pal system is composed of five core proteins: the inner membrane proteins TolA, TolQ and TolR, the periplasmic protein TolB and the outer membrane protein Pal. They form a network linking the inner and outer membranes and the peptidoglycan layer.

It is found in the periplasm. Functionally, part of the Tol-Pal system, which plays a role in outer membrane invagination during cell division and is important for maintaining outer membrane integrity. TolB occupies a key intermediary position in the Tol-Pal system because it communicates directly with both membrane-embedded components, Pal in the outer membrane and TolA in the inner membrane. This Yersinia pestis protein is Tol-Pal system protein TolB.